A 193-amino-acid chain; its full sequence is Acyl carrier protein phosphodiesterase (193 aa).

It belongs to the AcpH family.

The catalysed reaction is holo-[ACP] + H2O = apo-[ACP] + (R)-4'-phosphopantetheine + H(+). Functionally, converts holo-ACP to apo-ACP by hydrolytic cleavage of the phosphopantetheine prosthetic group from ACP. The protein is Acyl carrier protein phosphodiesterase of Shigella boydii serotype 18 (strain CDC 3083-94 / BS512).